The sequence spans 411 residues: Serine/threonine transporter SstT (411 aa).

9 helical membrane-spanning segments follow: residues 14 to 34, 43 to 63, 82 to 102, 141 to 161, 192 to 212, 218 to 238, 290 to 310, 330 to 350, and 357 to 377; these read GSLVIQIIVGIVAGILLASVA, FLGGLFVSALKAVAPILVFIL, IIMLYLFGTLMAALTAVVMSF, ALMSGNFIGILAWAIALGFAL, IGIFGLVANTFAETGFAALAG, AVLLGSMAVIALVVNPAIVFF, IPLGATINMAGAAITITVLTL, VVAAVSACGASGVAGGSLLLI, and FGIPNEVAMQVVAVGFIIGVI.

It belongs to the dicarboxylate/amino acid:cation symporter (DAACS) (TC 2.A.23) family.

The protein resides in the cell inner membrane. The enzyme catalyses L-serine(in) + Na(+)(in) = L-serine(out) + Na(+)(out). It carries out the reaction L-threonine(in) + Na(+)(in) = L-threonine(out) + Na(+)(out). In terms of biological role, involved in the import of serine and threonine into the cell, with the concomitant import of sodium (symport system). This is Serine/threonine transporter SstT from Photobacterium profundum (strain SS9).